A 262-amino-acid chain; its full sequence is Transcription factor Adf-1 (262 aa).

The segment at residues N24–R104 is a DNA-binding region (MADF). Positions S217–L256 constitute a BESS domain.

Post-translationally, O-glycosylated; contains N-acetylglucosamine side chains.

The protein resides in the nucleus. Functionally, may play an important role not only in the regulation of Adh expression but also in the transcription of other genes. This chain is Transcription factor Adf-1 (Adf1), found in Drosophila melanogaster (Fruit fly).